The sequence spans 169 residues: 2-C-methyl-D-erythritol 2,4-cyclodiphosphate synthase (169 aa).

Residues Asp13 and His15 each contribute to the a divalent metal cation site. 4-CDP-2-C-methyl-D-erythritol 2-phosphate contacts are provided by residues 13 to 15 and 39 to 40; these read DVH and HS. His47 contributes to the a divalent metal cation binding site. 4-CDP-2-C-methyl-D-erythritol 2-phosphate contacts are provided by residues 61-63, 66-70, Phe144, and Arg147; these read DIG and FPDTD.

Belongs to the IspF family. In terms of assembly, homotrimer. A divalent metal cation is required as a cofactor.

The catalysed reaction is 4-CDP-2-C-methyl-D-erythritol 2-phosphate = 2-C-methyl-D-erythritol 2,4-cyclic diphosphate + CMP. The protein operates within isoprenoid biosynthesis; isopentenyl diphosphate biosynthesis via DXP pathway; isopentenyl diphosphate from 1-deoxy-D-xylulose 5-phosphate: step 4/6. Involved in the biosynthesis of isopentenyl diphosphate (IPP) and dimethylallyl diphosphate (DMAPP), two major building blocks of isoprenoid compounds. Catalyzes the conversion of 4-diphosphocytidyl-2-C-methyl-D-erythritol 2-phosphate (CDP-ME2P) to 2-C-methyl-D-erythritol 2,4-cyclodiphosphate (ME-CPP) with a corresponding release of cytidine 5-monophosphate (CMP). The polypeptide is 2-C-methyl-D-erythritol 2,4-cyclodiphosphate synthase (Cupriavidus pinatubonensis (strain JMP 134 / LMG 1197) (Cupriavidus necator (strain JMP 134))).